The chain runs to 352 residues: tRNA-specific 2-thiouridylase MnmA (352 aa).

ATP-binding positions include 7–14 (GLSGGVDS) and Leu-33. The active-site Nucleophile is the Cys-94. Cysteines 94 and 193 form a disulfide. An ATP-binding site is contributed by Gly-119. The segment at 143-145 (KDQ) is interaction with tRNA. Cys-193 serves as the catalytic Cysteine persulfide intermediate. An interaction with tRNA region spans residues 298-299 (RY).

The protein belongs to the MnmA/TRMU family.

Its subcellular location is the cytoplasm. It carries out the reaction S-sulfanyl-L-cysteinyl-[protein] + uridine(34) in tRNA + AH2 + ATP = 2-thiouridine(34) in tRNA + L-cysteinyl-[protein] + A + AMP + diphosphate + H(+). In terms of biological role, catalyzes the 2-thiolation of uridine at the wobble position (U34) of tRNA, leading to the formation of s(2)U34. This is tRNA-specific 2-thiouridylase MnmA from Trichormus variabilis (strain ATCC 29413 / PCC 7937) (Anabaena variabilis).